Consider the following 460-residue polypeptide: Lipase member H-B (460 aa).

The first 26 residues, 1–26 (MLLSFYFNGLLLVGCLLSWGRSDTEG), serve as a signal peptide directing secretion. N-linked (GlcNAc...) asparagine glycans are attached at residues N67 and N75. The Nucleophile role is filled by S163. Residue N177 is glycosylated (N-linked (GlcNAc...) asparagine). The active-site Charge relay system is D187. C242 and C255 are joined by a disulfide. H257 acts as the Charge relay system in catalysis. 2 disulfides stabilise this stretch: C279/C290 and C293/C301. N289 carries N-linked (GlcNAc...) asparagine glycosylation. A glycan (N-linked (GlcNAc...) asparagine) is linked at N366. C436 and C455 are disulfide-bonded.

Belongs to the AB hydrolase superfamily. Lipase family.

It localises to the secreted. Its subcellular location is the cell membrane. It catalyses the reaction 1-hexadecanoyl-2-(9Z-octadecenoyl)-sn-glycero-3-phosphate + H2O = 2-(9Z-octadecenoyl)-sn-glycero-3-phosphate + hexadecanoate + H(+). Its function is as follows. Hydrolyzes specifically phosphatidic acid (PA) to produce 2-acyl lysophosphatidic acid (LPA; a potent bioactive lipid mediator) and fatty acid. Does not hydrolyze other phospholipids, like phosphatidylserine (PS), phosphatidylcholine (PC) and phosphatidylethanolamine (PE) or triacylglycerol (TG). In Xenopus laevis (African clawed frog), this protein is Lipase member H-B (liph-b).